Consider the following 347-residue polypeptide: NADH-ubiquinone oxidoreductase chain 2 (347 aa).

Transmembrane regions (helical) follow at residues 3–23 (PLIL…VMMS), 25–45 (HWLM…PLLM), 59–79 (YFLT…INLM), 96–116 (IIMT…FWVP), 122–142 (ISLT…LSIL), 148–168 (VINP…GGWG), 178–198 (ILAY…AFNP), 202–222 (LLNL…FMVA), 240–260 (ITTS…LAGF), 276–296 (IILA…YIRL), and 326–346 (LPPL…MILL).

This sequence belongs to the complex I subunit 2 family. In terms of assembly, core subunit of respiratory chain NADH dehydrogenase (Complex I) which is composed of 45 different subunits. Interacts with TMEM242.

The protein resides in the mitochondrion inner membrane. The catalysed reaction is a ubiquinone + NADH + 5 H(+)(in) = a ubiquinol + NAD(+) + 4 H(+)(out). Functionally, core subunit of the mitochondrial membrane respiratory chain NADH dehydrogenase (Complex I) which catalyzes electron transfer from NADH through the respiratory chain, using ubiquinone as an electron acceptor. Essential for the catalytic activity and assembly of complex I. The protein is NADH-ubiquinone oxidoreductase chain 2 of Peropteryx kappleri (Greater dog-like bat).